The primary structure comprises 489 residues: Diacylglycerol O-acyltransferase 1 (489 aa).

The interval Met-1–Val-54 is disordered. The Cytoplasmic segment spans residues Met-1–Ser-80. Residues Met-1–Trp-88 form an involved in homomerization region. Phosphoserine is present on Ser-20. Over residues Pro-44 to Asp-53 the composition is skewed to basic and acidic residues. A helical transmembrane segment spans residues Asn-81 to Ile-115. The Lumenal segment spans residues Gln-116–Ser-127. The tract at residues Gln-116–Ser-127 is extracellular loop 1 (EL1). The chain crosses the membrane as a helical span at residues Trp-128 to Val-153. The segment at Trp-128–Thr-489 is MBOAT fold. Over Gly-154–Glu-158 the chain is Cytoplasmic. The helical transmembrane segment at Gln-159 to Phe-181 threads the bilayer. Over Leu-182–Pro-188 the chain is Lumenal. The chain crosses the membrane as a helical span at residues Val-189–Ala-220. The Cytoplasmic portion of the chain corresponds to Gly-221 to Ile-274. An intracellular loop 1 (IL1) region spans residues Lys-225–Arg-277. The helical transmembrane segment at Arg-275–Met-309 threads the bilayer. Residues Lys-310–Asp-316 lie on the Lumenal side of the membrane. Residues Tyr-317–Met-354 form a helical membrane-spanning segment. Residues Gln-355 to Ser-400 are Cytoplasmic-facing. The tract at residues Gln-355 to Ser-400 is intracellular loop 2 (IL2). Positions Phe-361–Asn-367 match the FYXDWWN motif motif. Residues Trp-375–His-383, Tyr-391, and Arg-405 each bind an acyl-CoA. The tract at residues Pro-381–Leu-395 is amphipathic helix (AH). Residues Lys-401–Ser-421 traverse the membrane as a helical segment. The active site involves His-416. Residues Ile-422 to Leu-429 lie on the Lumenal side of the membrane. The chain crosses the membrane as a helical span at residues Trp-430–Phe-448. Residues Phe-449–Arg-450 lie on the Cytoplasmic side of the membrane. A helical transmembrane segment spans residues Gly-451 to Arg-482. Residue Tyr-478 coordinates an acyl-CoA. At Glu-483–Thr-489 the chain is on the lumenal side.

It belongs to the membrane-bound acyltransferase family. Sterol o-acyltransferase subfamily. In terms of assembly, homodimer or homotetramer; both forms have similar enzymatic activities.

Its subcellular location is the endoplasmic reticulum membrane. The enzyme catalyses an acyl-CoA + a 1,2-diacyl-sn-glycerol = a triacyl-sn-glycerol + CoA. The catalysed reaction is all-trans-retinol + an acyl-CoA = an all-trans-retinyl ester + CoA. It catalyses the reaction 2-(9Z-octadecenoyl)-glycerol + (9Z)-octadecenoyl-CoA = 1,2-di-(9Z-octadecenoyl)-sn-glycerol + CoA. It carries out the reaction 1,2-di-(9Z-octadecenoyl)-sn-glycerol + (9Z)-octadecenoyl-CoA = 1,2,3-tri-(9Z-octadecenoyl)-glycerol + CoA. The enzyme catalyses all-trans-retinol + hexadecanoyl-CoA = all-trans-retinyl hexadecanoate + CoA. The catalysed reaction is 1-O-(9Z-octadecenyl)-glycerol + (9Z)-octadecenoyl-CoA = 1-O-(9Z-octadecyl)-3-(9Z-octadecenoyl)-glycerol + CoA. It catalyses the reaction 1-O-(9Z-octadecyl)-3-(9Z-octadecenoyl)-glycerol + (9Z)-octadecenoyl-CoA = 1-O-(9Z-octadecenyl)-2,3-di-(9Z-octadecenoyl)glycerol + CoA. It carries out the reaction 1-(9Z-octadecenoyl)-glycerol + (9Z)-octadecenoyl-CoA = 1,2-di-(9Z-octadecenoyl)-glycerol + CoA. The enzyme catalyses 1,2-di-(9Z-octadecenoyl)-glycerol + (9Z)-octadecenoate + H(+) = 1,2,3-tri-(9Z-octadecenoyl)-glycerol + H2O. The catalysed reaction is 1-octadecanoyl-2-(5Z,8Z,11Z,14Z-eicosatetraenoyl)-sn-glycerol + (9Z)-octadecenoyl-CoA = 1-octadecanoyl-2-(5Z,8Z,11Z,14Z)-eicosatetraenoyl-3-(9Z)-octadecenoyl-sn-glycerol + CoA. It catalyses the reaction hexadecane-1,2-diol + 2 hexadecanoyl-CoA = 1,2-O,O-dihexadecanoyl-1,2-hexadecanediol + 2 CoA. It carries out the reaction hexadecane-1,2-diol + hexadecanoyl-CoA = 2-hydroxyhexadecyl hexadecanoate + CoA. The enzyme catalyses 2-(9Z-octadecenoyl)-glycerol + hexadecanoyl-CoA = 1-hexadecanoyl-2-(9Z-octadecenoyl)-sn-glycerol + CoA. The catalysed reaction is 1,2-di-(9Z-octadecenoyl)-sn-glycerol + hexadecanoyl-CoA = 1,2-di-(9Z)-octadecenoyl-3-hexadecanoyl-sn-glycerol + CoA. It catalyses the reaction hexadecan-1-ol + hexadecanoyl-CoA = hexadecanyl hexadecanoate + CoA. It carries out the reaction 13-cis-retinol + hexadecanoyl-CoA = 13-cis-retinyl hexadecanoate + CoA. The enzyme catalyses 1,3-di-(9Z-octadecenoyl)-glycerol + (9Z)-octadecenoyl-CoA = 1,2,3-tri-(9Z-octadecenoyl)-glycerol + CoA. The catalysed reaction is 2,3-di-(9Z)-octadecenoyl-sn-glycerol + (9Z)-octadecenoyl-CoA = 1,2,3-tri-(9Z-octadecenoyl)-glycerol + CoA. The protein operates within lipid metabolism; glycerolipid metabolism. Its function is as follows. Catalyzes the terminal and only committed step in triacylglycerol synthesis by using diacylglycerol and fatty acyl CoA as substrates. Highly expressed in epithelial cells of the small intestine and its activity is essential for the absorption of dietary fats. In liver, plays a role in esterifying exogenous fatty acids to glycerol, and is required to synthesize fat for storage. Also present in female mammary glands, where it produces fat in the milk. May be involved in VLDL (very low density lipoprotein) assembly. In contrast to DGAT2 it is not essential for survival. Functions as the major acyl-CoA retinol acyltransferase (ARAT) in the skin, where it acts to maintain retinoid homeostasis and prevent retinoid toxicity leading to skin and hair disorders. Exhibits additional acyltransferase activities, includin acyl CoA:monoacylglycerol acyltransferase (MGAT), wax monoester and wax diester synthases. Also able to use 1-monoalkylglycerol (1-MAkG) as an acyl acceptor for the synthesis of monoalkyl-monoacylglycerol (MAMAG). In Bos taurus (Bovine), this protein is Diacylglycerol O-acyltransferase 1 (DGAT1).